Consider the following 351-residue polypeptide: S-adenosylmethionine:tRNA ribosyltransferase-isomerase (351 aa).

The protein belongs to the QueA family. In terms of assembly, monomer.

It is found in the cytoplasm. The enzyme catalyses 7-aminomethyl-7-carbaguanosine(34) in tRNA + S-adenosyl-L-methionine = epoxyqueuosine(34) in tRNA + adenine + L-methionine + 2 H(+). Its pathway is tRNA modification; tRNA-queuosine biosynthesis. Transfers and isomerizes the ribose moiety from AdoMet to the 7-aminomethyl group of 7-deazaguanine (preQ1-tRNA) to give epoxyqueuosine (oQ-tRNA). The sequence is that of S-adenosylmethionine:tRNA ribosyltransferase-isomerase from Hahella chejuensis (strain KCTC 2396).